The following is a 138-amino-acid chain: Small ribosomal subunit protein uS8 (138 aa).

The protein belongs to the universal ribosomal protein uS8 family. Part of the 30S ribosomal subunit. Contacts proteins S5 and S12.

Its function is as follows. One of the primary rRNA binding proteins, it binds directly to 16S rRNA central domain where it helps coordinate assembly of the platform of the 30S subunit. The sequence is that of Small ribosomal subunit protein uS8 (rpsH) from Thermus thermophilus (strain ATCC BAA-163 / DSM 7039 / HB27).